A 510-amino-acid polypeptide reads, in one-letter code: Cytochrome P450 monooxygenase AFLA_114810 (510 aa).

The signal sequence occupies residues 1–17 (MLILLGLLCLYTGLYVA). C444 is a heme binding site.

It belongs to the cytochrome P450 family. It depends on heme as a cofactor.

It functions in the pathway secondary metabolite biosynthesis. In terms of biological role, cytochrome P450 monooxygenase; part of the gene cluster 41 that mediates the biosynthesis of an extracellular and diffusible metabolite that is able to stimulate colony sclerotial production. The sequence is that of Cytochrome P450 monooxygenase AFLA_114810 from Aspergillus flavus (strain ATCC 200026 / FGSC A1120 / IAM 13836 / NRRL 3357 / JCM 12722 / SRRC 167).